Consider the following 188-residue polypeptide: Elongation factor P (188 aa).

The protein belongs to the elongation factor P family.

The protein resides in the cytoplasm. Its pathway is protein biosynthesis; polypeptide chain elongation. Involved in peptide bond synthesis. Stimulates efficient translation and peptide-bond synthesis on native or reconstituted 70S ribosomes in vitro. Probably functions indirectly by altering the affinity of the ribosome for aminoacyl-tRNA, thus increasing their reactivity as acceptors for peptidyl transferase. This chain is Elongation factor P, found in Bacteroides thetaiotaomicron (strain ATCC 29148 / DSM 2079 / JCM 5827 / CCUG 10774 / NCTC 10582 / VPI-5482 / E50).